The chain runs to 612 residues: Phosphoenolpyruvate carboxykinase [GTP] (612 aa).

Substrate-binding positions include R82 and 221–223 (YGG). Mn(2+) is bound by residues K230 and H250. S272 serves as a coordination point for substrate. Position 273 to 278 (273 to 278 (ACGKTN)) interacts with GTP. Residue C274 is part of the active site. D297 contributes to the Mn(2+) binding site. 388–390 (NSR) contacts substrate. GTP-binding positions include R390, R421, and 516–519 (FGEN).

The protein belongs to the phosphoenolpyruvate carboxykinase [GTP] family. In terms of assembly, monomer. Mn(2+) is required as a cofactor.

It is found in the cytoplasm. It catalyses the reaction oxaloacetate + GTP = phosphoenolpyruvate + GDP + CO2. The protein operates within carbohydrate biosynthesis; gluconeogenesis. Catalyzes the conversion of oxaloacetate (OAA) to phosphoenolpyruvate (PEP), the rate-limiting step in the metabolic pathway that produces glucose from lactate and other precursors derived from the citric acid cycle. The sequence is that of Phosphoenolpyruvate carboxykinase [GTP] from Corynebacterium efficiens (strain DSM 44549 / YS-314 / AJ 12310 / JCM 11189 / NBRC 100395).